The sequence spans 195 residues: NADH-quinone oxidoreductase subunit B (195 aa).

[4Fe-4S] cluster-binding residues include cysteine 74, cysteine 75, cysteine 139, and cysteine 169.

It belongs to the complex I 20 kDa subunit family. NDH-1 is composed of 14 different subunits. Subunits NuoB, C, D, E, F, and G constitute the peripheral sector of the complex. [4Fe-4S] cluster is required as a cofactor.

The protein localises to the cell inner membrane. The enzyme catalyses a quinone + NADH + 5 H(+)(in) = a quinol + NAD(+) + 4 H(+)(out). Functionally, NDH-1 shuttles electrons from NADH, via FMN and iron-sulfur (Fe-S) centers, to quinones in the respiratory chain. The immediate electron acceptor for the enzyme in this species is believed to be ubiquinone. Couples the redox reaction to proton translocation (for every two electrons transferred, four hydrogen ions are translocated across the cytoplasmic membrane), and thus conserves the redox energy in a proton gradient. The sequence is that of NADH-quinone oxidoreductase subunit B from Methylorubrum extorquens (strain PA1) (Methylobacterium extorquens).